Consider the following 443-residue polypeptide: UDP-N-acetylmuramate--L-alanine ligase (443 aa).

An ATP-binding site is contributed by 110–116 (GAHGKTS).

This sequence belongs to the MurCDEF family.

It is found in the cytoplasm. It carries out the reaction UDP-N-acetyl-alpha-D-muramate + L-alanine + ATP = UDP-N-acetyl-alpha-D-muramoyl-L-alanine + ADP + phosphate + H(+). It functions in the pathway cell wall biogenesis; peptidoglycan biosynthesis. Its function is as follows. Cell wall formation. This chain is UDP-N-acetylmuramate--L-alanine ligase, found in Streptococcus agalactiae serotype Ia (strain ATCC 27591 / A909 / CDC SS700).